Consider the following 88-residue polypeptide: Gas vesicle protein A2 (88 aa).

It belongs to the gas vesicle GvpA family. In terms of assembly, the gas vesicle shell is 2 nm thick and consists of a single layer of this protein. It forms helical ribs nearly perpendicular to the long axis of the vesicle.

The protein resides in the gas vesicle shell. In terms of biological role, gas vesicles are hollow, gas filled proteinaceous nanostructures found in some microorganisms. During planktonic growth they allow positioning of the organism at a favorable depth for light or nutrient acquisition. GvpA forms the protein shell. Its function is as follows. It is not clear if the 2 type A proteins in this organism are functionally redundant. Functionally, when a minimal gvp locus (gvpA2-gvpR-gvpN-gvpF-gvpG-gvpL-gvpS-gvpK-gvpJ-gvpT-gvpU, called pNL29) is expressed in E.coli gas vesicles are made. The polypeptide is Gas vesicle protein A2 (Priestia megaterium (Bacillus megaterium)).